The primary structure comprises 547 residues: Dihydroxy-acid dehydratase (547 aa).

Position 78 (Asp78) interacts with Mg(2+). Cys119 serves as a coordination point for [2Fe-2S] cluster. Residues Asp120 and Lys121 each contribute to the Mg(2+) site. Lys121 carries the N6-carboxylysine modification. Residue Cys191 participates in [2Fe-2S] cluster binding. Residue Glu439 coordinates Mg(2+). Ser464 acts as the Proton acceptor in catalysis.

This sequence belongs to the IlvD/Edd family. Homodimer. [2Fe-2S] cluster is required as a cofactor. Requires Mg(2+) as cofactor.

The enzyme catalyses (2R)-2,3-dihydroxy-3-methylbutanoate = 3-methyl-2-oxobutanoate + H2O. It catalyses the reaction (2R,3R)-2,3-dihydroxy-3-methylpentanoate = (S)-3-methyl-2-oxopentanoate + H2O. The protein operates within amino-acid biosynthesis; L-isoleucine biosynthesis; L-isoleucine from 2-oxobutanoate: step 3/4. It participates in amino-acid biosynthesis; L-valine biosynthesis; L-valine from pyruvate: step 3/4. Functionally, functions in the biosynthesis of branched-chain amino acids. Catalyzes the dehydration of (2R,3R)-2,3-dihydroxy-3-methylpentanoate (2,3-dihydroxy-3-methylvalerate) into 2-oxo-3-methylpentanoate (2-oxo-3-methylvalerate) and of (2R)-2,3-dihydroxy-3-methylbutanoate (2,3-dihydroxyisovalerate) into 2-oxo-3-methylbutanoate (2-oxoisovalerate), the penultimate precursor to L-isoleucine and L-valine, respectively. The protein is Dihydroxy-acid dehydratase of Methanospirillum hungatei JF-1 (strain ATCC 27890 / DSM 864 / NBRC 100397 / JF-1).